We begin with the raw amino-acid sequence, 694 residues long: Elongation factor G (694 aa).

The region spanning 8 to 287 (EDYRNFGIMA…AVVEFLPAPT (280 aa)) is the tr-type G domain. GTP-binding positions include 17-24 (AHIDAGKT), 86-90 (DTPGH), and 140-143 (NKMD).

This sequence belongs to the TRAFAC class translation factor GTPase superfamily. Classic translation factor GTPase family. EF-G/EF-2 subfamily.

The protein localises to the cytoplasm. Catalyzes the GTP-dependent ribosomal translocation step during translation elongation. During this step, the ribosome changes from the pre-translocational (PRE) to the post-translocational (POST) state as the newly formed A-site-bound peptidyl-tRNA and P-site-bound deacylated tRNA move to the P and E sites, respectively. Catalyzes the coordinated movement of the two tRNA molecules, the mRNA and conformational changes in the ribosome. The polypeptide is Elongation factor G (Brucella canis (strain ATCC 23365 / NCTC 10854 / RM-666)).